The sequence spans 393 residues: MEQCACVERELDKVLHKFLTYGQHCEQSLEELLHSVGQLRAELASAALQGTPLSATLSLVMSQCCRKIRDTVQKLASDHKDIHSSVSRVGKAIDRNFDSEICGVVSDAVWDSREKQQQILQMAIVEHLYQQGMLSVAEELCQESTLNVDLDFKQPFLELNRILEALHEQDLGPALEWAVSHRQRLLELNSSLEFKLHRLHFIRLLAGGPEKQLEALSYARHFQPFARLHQREIQVMMGSLVYLRLGLEKSPYCHLLDNSHWAEICETFTRDACSLLGLSVESPLSVSFASGCVALPVLMNIKAVIEQRQCTGVWSHKDELPIEIELGMKCWYHSVFACPILRQQTSDSNPPIKLICGHVISRDALNKLINGGKLKCPYCPMEQNPADGKRIIF.

Met1 carries the post-translational modification N-acetylmethionine. The LisH domain maps to 116 to 148 (QQQILQMAIVEHLYQQGMLSVAEELCQESTLNV). The CTLH domain occupies 155–212 (PFLELNRILEALHEQDLGPALEWAVSHRQRLLELNSSLEFKLHRLHFIRLLAGGPEKQ). The RING-Gid-type zinc finger occupies 338–379 (CPILRQQTSDSNPPIKLICGHVISRDALNKLINGGKLKCPYC).

As to quaternary structure, identified in the CTLH complex that contains GID4, RANBP9 and/or RANBP10, MKLN1, MAEA, RMND5A (or alternatively its paralog RMND5B), GID8, ARMC8, WDR26 and YPEL5. Within this complex, MAEA, RMND5A (or alternatively its paralog RMND5B), GID8, WDR26, and RANBP9 and/or RANBP10 form the catalytic core, while GID4, MKLN1, ARMC8 and YPEL5 have ancillary roles.

The protein resides in the cytoplasm. Its subcellular location is the cytosol. The enzyme catalyses S-ubiquitinyl-[E2 ubiquitin-conjugating enzyme]-L-cysteine + [acceptor protein]-L-lysine = [E2 ubiquitin-conjugating enzyme]-L-cysteine + N(6)-ubiquitinyl-[acceptor protein]-L-lysine.. Core component of the CTLH E3 ubiquitin-protein ligase complex that selectively accepts ubiquitin from UBE2H and mediates ubiquitination and subsequent proteasomal degradation of the transcription factor HBP1. MAEA and RMND5A are both required for catalytic activity of the CTLH E3 ubiquitin-protein ligase complex. Catalytic activity of the complex is required for normal cell proliferation. The CTLH E3 ubiquitin-protein ligase complex is not required for the degradation of enzymes involved in gluconeogenesis, such as FBP1. This Mus musculus (Mouse) protein is E3 ubiquitin-protein transferase RMND5B (Rmnd5b).